Reading from the N-terminus, the 130-residue chain is Small ribosomal subunit protein uS8 (130 aa).

The protein belongs to the universal ribosomal protein uS8 family. In terms of assembly, part of the 30S ribosomal subunit. Contacts proteins S5 and S12.

In terms of biological role, one of the primary rRNA binding proteins, it binds directly to 16S rRNA central domain where it helps coordinate assembly of the platform of the 30S subunit. The polypeptide is Small ribosomal subunit protein uS8 (Alcanivorax borkumensis (strain ATCC 700651 / DSM 11573 / NCIMB 13689 / SK2)).